We begin with the raw amino-acid sequence, 181 residues long: ATP synthase subunit delta (181 aa).

It belongs to the ATPase delta chain family. As to quaternary structure, F-type ATPases have 2 components, F(1) - the catalytic core - and F(0) - the membrane proton channel. F(1) has five subunits: alpha(3), beta(3), gamma(1), delta(1), epsilon(1). F(0) has three main subunits: a(1), b(2) and c(10-14). The alpha and beta chains form an alternating ring which encloses part of the gamma chain. F(1) is attached to F(0) by a central stalk formed by the gamma and epsilon chains, while a peripheral stalk is formed by the delta and b chains.

Its subcellular location is the cell membrane. Its function is as follows. F(1)F(0) ATP synthase produces ATP from ADP in the presence of a proton or sodium gradient. F-type ATPases consist of two structural domains, F(1) containing the extramembraneous catalytic core and F(0) containing the membrane proton channel, linked together by a central stalk and a peripheral stalk. During catalysis, ATP synthesis in the catalytic domain of F(1) is coupled via a rotary mechanism of the central stalk subunits to proton translocation. Functionally, this protein is part of the stalk that links CF(0) to CF(1). It either transmits conformational changes from CF(0) to CF(1) or is implicated in proton conduction. In Bacillus pumilus (strain SAFR-032), this protein is ATP synthase subunit delta.